A 212-amino-acid chain; its full sequence is Histidine biosynthesis bifunctional protein HisIE (212 aa).

Residues 1 to 109 (MRPDFHKQEL…ELIPFDDSDI (109 aa)) are phosphoribosyl-AMP cyclohydrolase. Residues 110–212 (FSELEKQIID…KKEFHTRTAD (103 aa)) are phosphoribosyl-ATP pyrophosphohydrolase.

In the N-terminal section; belongs to the PRA-CH family. It in the C-terminal section; belongs to the PRA-PH family.

The protein localises to the cytoplasm. The catalysed reaction is 1-(5-phospho-beta-D-ribosyl)-ATP + H2O = 1-(5-phospho-beta-D-ribosyl)-5'-AMP + diphosphate + H(+). The enzyme catalyses 1-(5-phospho-beta-D-ribosyl)-5'-AMP + H2O = 1-(5-phospho-beta-D-ribosyl)-5-[(5-phospho-beta-D-ribosylamino)methylideneamino]imidazole-4-carboxamide. It functions in the pathway amino-acid biosynthesis; L-histidine biosynthesis; L-histidine from 5-phospho-alpha-D-ribose 1-diphosphate: step 2/9. Its pathway is amino-acid biosynthesis; L-histidine biosynthesis; L-histidine from 5-phospho-alpha-D-ribose 1-diphosphate: step 3/9. The chain is Histidine biosynthesis bifunctional protein HisIE (hisI) from Lactococcus lactis subsp. lactis (strain IL1403) (Streptococcus lactis).